The sequence spans 648 residues: Putative potassium transport protein DDB_G0292412 (648 aa).

Residues 48-68 (LFLLVILVQLGSTVLLTLPIV) traverse the membrane as a helical segment. An N-linked (GlcNAc...) asparagine glycan is attached at Asn81. Disordered regions lie at residues 106–145 (HDFKDDDDENDNNNNEENDDNDDESYQHNNNNNEEHDDND) and 223–261 (QQQQQPSTTTTTTTTTNSTLNKSTNNSTNNNNNTNDSQS). The span at 110–129 (DDDDENDNNNNEENDDNDDE) shows a compositional bias: acidic residues. Residues 199–227 (IIQQQQQQQQQQQQQQQQQQQQQQQQQQQ) are a coiled coil. N-linked (GlcNAc...) asparagine glycans are attached at residues Asn239, Asn243, Asn247, Asn248, Asn254, and Asn257. The next 6 helical transmembrane spans lie at 313 to 333 (LLVIIPCYIITIYILGFISIG), 353 to 373 (GWWWSLFHTFSAFNNAGLALF), 385 to 405 (FLLITLSILIFLGNTLFPVFL), 443 to 463 (VQLFVIWCIFNVSQIALMALL), 472 to 491 (NMNYGTILLNYYFSSISTRT), and 505 to 525 (SVLLLFVGLMFVSSYPFIISL). Asn536 carries N-linked (GlcNAc...) asparagine glycosylation. 3 consecutive transmembrane segments (helical) span residues 550–570 (IFVPYICILFIAIFESQLLES), 571–591 (GVITVFQILFEAISAFGNVGL), and 592–612 (SISITLSTYSKLVFIALMLAG).

The protein belongs to the TrkH potassium transport family.

The protein resides in the membrane. Its function is as follows. May function as a potassium transporter. The polypeptide is Putative potassium transport protein DDB_G0292412 (Dictyostelium discoideum (Social amoeba)).